We begin with the raw amino-acid sequence, 128 residues long: MTGFRDQLGVHAQALVLRETRNNLLTSNIANAATPHYKARDIDFGAELARASGNGTVRTTEARHFAAGGPAARGEALYRDPVSPSLDGNTVEMAVEQMEFAENTLRYQTSLALLNRRISGLMTAIKGE.

Belongs to the flagella basal body rod proteins family. The basal body constitutes a major portion of the flagellar organelle and consists of a number of rings mounted on a central rod. In Gram-negative bacteria, at least four rings, L, P, S and M are present, whereas Gram-positive bacteria lack the L and P rings. The rod consists of about 26 subunits of FlgG in the distal portion, and FlgB, FlgC and FlgF build up the proximal portion of the rod with about 6 subunits each. Rod assembly occurs by export via the flagellum-specific pathway of its constituent proteins and by their incorporation into the rod structure in the probable order of FlgB, FlgC, FlgF and FlgG. Another protein, FliE, also assembles onto the stable rod structure.

Its subcellular location is the bacterial flagellum basal body. In terms of biological role, structural component of flagellum, the bacterial motility apparatus. Part of the rod structure of flagellar basal body. This chain is Flagellar basal body rod protein FlgB, found in Cereibacter sphaeroides (Rhodobacter sphaeroides).